The following is a 100-amino-acid chain: Secreted protein of Ly-6 domain 1 (100 aa).

A signal peptide spans 1 to 22; sequence MAKCLLLLLLVVLSSLLGLPQA. The 78-residue stretch at 23-100 folds into the UPAR/Ly6 domain; it reads LECFQCNRVN…CHDSPLCNKF (78 aa). Intrachain disulfides connect Cys-25–Cys-52, Cys-28–Cys-37, Cys-44–Cys-70, Cys-74–Cys-90, and Cys-91–Cys-97. A glycan (N-linked (GlcNAc...) asparagine) is linked at Asn-60.

Post-translationally, glycosylated. In terms of tissue distribution, expressed in placenta, where it is detected in both fetal tissues (cotyledon and intercotyledon) and maternal tissues (caruncle and intercaruncular endometrium) (at protein level). Expressed in the mesenchyme area of villi in the cotyledon (at protein level). In endometrium, expressed in the luminal epithelium and weakly in the subluminal stroma (at protein level). Detected in trophoblast mononucleate cells (TMCs) (at protein level). Also detected in trophoblast binucleate cells (BNCs). Overall, expression is strongest in fetal tissue and lower in maternal tissue. Not detected in other tissues tested.

It localises to the secreted. In terms of biological role, binds specifically to type I collagen. The polypeptide is Secreted protein of Ly-6 domain 1 (Bos taurus (Bovine)).